We begin with the raw amino-acid sequence, 244 residues long: Acetylglutamate kinase (244 aa).

Substrate is bound by residues 40–41, Arg62, and Asn155; that span reads GG.

Belongs to the acetylglutamate kinase family. ArgB subfamily.

It localises to the cytoplasm. The enzyme catalyses N-acetyl-L-glutamate + ATP = N-acetyl-L-glutamyl 5-phosphate + ADP. The protein operates within amino-acid biosynthesis; L-arginine biosynthesis; N(2)-acetyl-L-ornithine from L-glutamate: step 2/4. In terms of biological role, catalyzes the ATP-dependent phosphorylation of N-acetyl-L-glutamate. This Leuconostoc mesenteroides subsp. mesenteroides (strain ATCC 8293 / DSM 20343 / BCRC 11652 / CCM 1803 / JCM 6124 / NCDO 523 / NBRC 100496 / NCIMB 8023 / NCTC 12954 / NRRL B-1118 / 37Y) protein is Acetylglutamate kinase.